The sequence spans 184 residues: MPSETIGVIADRYATALFELADSSGSLDQVAGDLKTLQAMLRESADLRRVVDSPVLSRNDQGKAISAVAKAAGFSELTNKFLGLAAQNRRLHTLSGVIASYLGRLAARRGEKSATVASAVALSPAQQDALTTALKAAFGGNVAVDVKVDPSLLGGLVVQVGSRMVDSSLKTKLQHLKLAMKGVG.

The protein belongs to the ATPase delta chain family. F-type ATPases have 2 components, F(1) - the catalytic core - and F(0) - the membrane proton channel. F(1) has five subunits: alpha(3), beta(3), gamma(1), delta(1), epsilon(1). F(0) has three main subunits: a(1), b(2) and c(10-14). The alpha and beta chains form an alternating ring which encloses part of the gamma chain. F(1) is attached to F(0) by a central stalk formed by the gamma and epsilon chains, while a peripheral stalk is formed by the delta and b chains.

It localises to the cell inner membrane. Its function is as follows. F(1)F(0) ATP synthase produces ATP from ADP in the presence of a proton or sodium gradient. F-type ATPases consist of two structural domains, F(1) containing the extramembraneous catalytic core and F(0) containing the membrane proton channel, linked together by a central stalk and a peripheral stalk. During catalysis, ATP synthesis in the catalytic domain of F(1) is coupled via a rotary mechanism of the central stalk subunits to proton translocation. This protein is part of the stalk that links CF(0) to CF(1). It either transmits conformational changes from CF(0) to CF(1) or is implicated in proton conduction. This chain is ATP synthase subunit delta, found in Paramagnetospirillum magneticum (strain ATCC 700264 / AMB-1) (Magnetospirillum magneticum).